Reading from the N-terminus, the 345-residue chain is tRNA-specific 2-thiouridylase MnmA (345 aa).

ATP-binding positions include 6–13 and L32; that span reads AMSGGVDS. Residue C100 is the Nucleophile of the active site. C100 and C197 are oxidised to a cystine. G124 lines the ATP pocket. The tract at residues 146–148 is interaction with tRNA; the sequence is RDQ. C197 functions as the Cysteine persulfide intermediate in the catalytic mechanism.

This sequence belongs to the MnmA/TRMU family.

It localises to the cytoplasm. It catalyses the reaction S-sulfanyl-L-cysteinyl-[protein] + uridine(34) in tRNA + AH2 + ATP = 2-thiouridine(34) in tRNA + L-cysteinyl-[protein] + A + AMP + diphosphate + H(+). In terms of biological role, catalyzes the 2-thiolation of uridine at the wobble position (U34) of tRNA, leading to the formation of s(2)U34. In Acidiphilium cryptum (strain JF-5), this protein is tRNA-specific 2-thiouridylase MnmA.